Here is a 103-residue protein sequence, read N- to C-terminus: Isocitrate dehydrogenase [NAD] subunit beta, mitochondrial (103 aa).

It belongs to the isocitrate and isopropylmalate dehydrogenases family. In terms of assembly, heterooligomer of subunits alpha (IDH3A), beta (IDH3B), and gamma (IDH3G) in the apparent ratio of 2:1:1. The heterodimer containing one IDH3A and one IDH3B subunit and the heterodimer containing one IDH3A and one IDH3G subunit assemble into a heterotetramer (which contains two subunits of IDH3A, one of IDH3B and one of IDH3G) and further into the heterooctamer.

The protein resides in the mitochondrion. Its activity is regulated as follows. The heterotetramer and the heterodimer composed of IDH3A and IDH3G subunits can be allosterically activated by citrate (CIT) or/and ADP, and the two activators can act independently or synergistically. The heterodimer composed of IDH3A and IDH3B subunits cannot be allosterically regulated and the allosteric regulation of the heterotetramer is through the IDH3G subunit and not the IDH3B subunit. The IDH3G subunit contains the allosteric site which consists of a CIT-binding site and an ADP-binding site, and the binding of CIT and ADP causes conformational changes at the allosteric site which are transmitted to the active site in the catalytic subunit (IDH3A) through a cascade of conformational changes at the heterodimer interface, leading to stabilization of the isocitrate-binding at the active site and thus activation of the enzyme. ATP can activate the heterotetramer and the heterodimer composed of IDH3A and IDH3G subunits at low concentrations but inhibits their activities at high concentrations, whereas ATP exhibits only inhibitory effect on the heterodimer composed of IDH3A and IDH3B subunits. Plays a structural role to facilitate the assembly and ensure the full activity of the enzyme catalyzing the decarboxylation of isocitrate (ICT) into alpha-ketoglutarate. The heterodimer composed of the alpha (IDH3A) and beta (IDH3B) subunits and the heterodimer composed of the alpha (IDH3A) and gamma (IDH3G) subunits, have considerable basal activity but the full activity of the heterotetramer (containing two subunits of IDH3A, one of IDH3B and one of IDH3G) requires the assembly and cooperative function of both heterodimers. In Sus scrofa (Pig), this protein is Isocitrate dehydrogenase [NAD] subunit beta, mitochondrial (IDH3B).